The following is a 77-amino-acid chain: Large ribosomal subunit protein bL28 (77 aa).

Belongs to the bacterial ribosomal protein bL28 family.

The chain is Large ribosomal subunit protein bL28 from Dechloromonas aromatica (strain RCB).